Here is a 119-residue protein sequence, read N- to C-terminus: Centrocin 1 (119 aa).

The first 20 residues, 1–20 (MMIKIAVVLCAVMATTMVRA), serve as a signal peptide directing secretion. Residues 21–50 (KYVEEQELADLLDLLISEEVSSPDDAVALQ) constitute a propeptide that is removed on maturation. 2 positions are modified to 6'-bromotryptophan: Trp-52 and Trp-53. A disulfide bridge links Cys-75 with Cys-110. The propeptide occupies 81–104 (SPQEARAKVLEAFPEMKEADLDEE). Asparagine amide is present on Asn-117.

As to quaternary structure, heterodimer of a light and a heavy chain, probably disulfide-linked.

Its function is as follows. Has antimicrobial activity against Gram-negative bacteria, Gram-positive bacteria and against fungi with minimum inhibitory concentration (MIC) between 0.78 uM and 50 uM. Shows little hemolytic activity even at a concentration of 100 uM. Has no antimicrobial activity. Shows no hemolytic activity. This is Centrocin 1 from Echinus esculentus (Sea urchin).